A 333-amino-acid chain; its full sequence is Holliday junction branch migration complex subunit RuvB (333 aa).

Positions 1–182 (MTNRILDMEQ…FGITGHMEYY (182 aa)) are large ATPase domain (RuvB-L). Residues Leu21, Arg22, Gly63, Lys66, Thr67, Thr68, 129-131 (EDF), Arg172, Tyr182, and Arg219 each bind ATP. A Mg(2+)-binding site is contributed by Thr67. A small ATPAse domain (RuvB-S) region spans residues 183–253 (ELADLTEIVE…ITDKALTMLD (71 aa)). The tract at residues 256 to 333 (REGLDYVDQK…EHLGYPYTEK (78 aa)) is head domain (RuvB-H). DNA-binding residues include Arg292, Arg311, Arg313, and Arg316.

Belongs to the RuvB family. As to quaternary structure, homohexamer. Forms an RuvA(8)-RuvB(12)-Holliday junction (HJ) complex. HJ DNA is sandwiched between 2 RuvA tetramers; dsDNA enters through RuvA and exits via RuvB. An RuvB hexamer assembles on each DNA strand where it exits the tetramer. Each RuvB hexamer is contacted by two RuvA subunits (via domain III) on 2 adjacent RuvB subunits; this complex drives branch migration. In the full resolvosome a probable DNA-RuvA(4)-RuvB(12)-RuvC(2) complex forms which resolves the HJ.

The protein localises to the cytoplasm. The catalysed reaction is ATP + H2O = ADP + phosphate + H(+). The RuvA-RuvB-RuvC complex processes Holliday junction (HJ) DNA during genetic recombination and DNA repair, while the RuvA-RuvB complex plays an important role in the rescue of blocked DNA replication forks via replication fork reversal (RFR). RuvA specifically binds to HJ cruciform DNA, conferring on it an open structure. The RuvB hexamer acts as an ATP-dependent pump, pulling dsDNA into and through the RuvAB complex. RuvB forms 2 homohexamers on either side of HJ DNA bound by 1 or 2 RuvA tetramers; 4 subunits per hexamer contact DNA at a time. Coordinated motions by a converter formed by DNA-disengaged RuvB subunits stimulates ATP hydrolysis and nucleotide exchange. Immobilization of the converter enables RuvB to convert the ATP-contained energy into a lever motion, pulling 2 nucleotides of DNA out of the RuvA tetramer per ATP hydrolyzed, thus driving DNA branch migration. The RuvB motors rotate together with the DNA substrate, which together with the progressing nucleotide cycle form the mechanistic basis for DNA recombination by continuous HJ branch migration. Branch migration allows RuvC to scan DNA until it finds its consensus sequence, where it cleaves and resolves cruciform DNA. The polypeptide is Holliday junction branch migration complex subunit RuvB (Streptococcus suis (strain 98HAH33)).